Here is a 225-residue protein sequence, read N- to C-terminus: Fibronectin type III domain-containing protein 10 (225 aa).

An N-terminal signal peptide occupies residues 1–19; it reads MRAPPLLLLLAACAPPSGA. Over 20–181 the chain is Extracellular; the sequence is AVDPTPPGWE…FTAEPAAMQE (162 aa). Residues 72-167 enclose the Fibronectin type-III domain; sequence LASAGGSLRA…ELAAAPPELA (96 aa). N-linked (GlcNAc...) asparagine glycosylation is found at Asn-86 and Asn-109. Residues 182 to 202 form a helical membrane-spanning segment; the sequence is IVVAMTAVGGSICVMLVVICL. The Cytoplasmic segment spans residues 203-225; that stretch reads LVAYITENLMHPTFRRPSLRRQP.

The protein localises to the membrane. The chain is Fibronectin type III domain-containing protein 10 (Fndc10) from Rattus norvegicus (Rat).